The sequence spans 321 residues: Zinc finger protein 524 (321 aa).

Composition is skewed to polar residues over residues 1–14 and 39–48; these read MDNP…STLS and ATTSNRTLKS. 2 disordered regions span residues 1–80 and 86–105; these read MDNP…DLLL and VPYT…SGSK. The a.T hook DNA-binding region spans 49 to 59; that stretch reads SLPRKRGRPPR. C2H2-type zinc fingers lie at residues 109 to 131, 137 to 159, 165 to 187, and 193 to 216; these read HFCP…SISH, HVCK…CNIH, FRCV…HRIH, and YQCP…KRKH. A disordered region spans residues 248–321; it reads GVQEESPEGK…PGAIGHPPVD (74 aa). Residues 262–271 are compositionally biased toward polar residues; it reads PISSTTSPLS. Residues 274 to 285 are compositionally biased toward gly residues; it reads TAGGSAGAGRGQ.

It belongs to the krueppel C2H2-type zinc-finger protein family.

Its subcellular location is the nucleus. In terms of biological role, may be involved in transcriptional regulation. This is Zinc finger protein 524 (Znf524) from Mus musculus (Mouse).